The primary structure comprises 419 residues: Tyrosine--tRNA ligase (419 aa).

Residue Tyr-34 participates in L-tyrosine binding. The 'HIGH' region motif lies at 39–48 (PTADSLHLGN). L-tyrosine is bound by residues Tyr-169 and Gln-173. A 'KMSKS' region motif is present at residues 229–233 (KFGKS). Lys-232 lines the ATP pocket. The 67-residue stretch at 353 to 419 (LTLVELLISA…GKKKNFVLTY (67 aa)) folds into the S4 RNA-binding domain.

This sequence belongs to the class-I aminoacyl-tRNA synthetase family. TyrS type 1 subfamily. As to quaternary structure, homodimer.

It is found in the cytoplasm. It catalyses the reaction tRNA(Tyr) + L-tyrosine + ATP = L-tyrosyl-tRNA(Tyr) + AMP + diphosphate + H(+). Functionally, catalyzes the attachment of tyrosine to tRNA(Tyr) in a two-step reaction: tyrosine is first activated by ATP to form Tyr-AMP and then transferred to the acceptor end of tRNA(Tyr). In Lactococcus lactis subsp. lactis (strain IL1403) (Streptococcus lactis), this protein is Tyrosine--tRNA ligase.